A 113-amino-acid polypeptide reads, in one-letter code: Phosphoribosyl-ATP pyrophosphatase (113 aa).

This sequence belongs to the PRA-PH family.

The protein localises to the cytoplasm. The enzyme catalyses 1-(5-phospho-beta-D-ribosyl)-ATP + H2O = 1-(5-phospho-beta-D-ribosyl)-5'-AMP + diphosphate + H(+). The protein operates within amino-acid biosynthesis; L-histidine biosynthesis; L-histidine from 5-phospho-alpha-D-ribose 1-diphosphate: step 2/9. The chain is Phosphoribosyl-ATP pyrophosphatase from Hydrogenovibrio crunogenus (strain DSM 25203 / XCL-2) (Thiomicrospira crunogena).